Reading from the N-terminus, the 140-residue chain is Myrosinase 2 (140 aa).

The active-site Nucleophile is arginine 70. Asparagine 114 and asparagine 127 each carry an N-linked (GlcNAc...) asparagine glycan.

The protein belongs to the glycosyl hydrolase 1 family. Homodimer.

The enzyme catalyses a thioglucoside + H2O = a sugar + a thiol.. Inhibited by ascorbate. Functionally, degradation of glucosinolates (glucose residue linked by a thioglucoside bound to an amino acid derivative) to glucose, sulfate and any of the products: thiocyanates, isothiocyanates, nitriles, epithionitriles or oxazolidine-2-thiones. This chain is Myrosinase 2, found in Brevicoryne brassicae (Mealy cabbage aphid).